Reading from the N-terminus, the 160-residue chain is Glyoxalase domain-containing protein 5 (160 aa).

Positions 37 to 157 (RLDHIVMTVK…DRNLIEVSNY (121 aa)) constitute a VOC domain.

Belongs to the glyoxalase I family.

This Homo sapiens (Human) protein is Glyoxalase domain-containing protein 5 (GLOD5).